We begin with the raw amino-acid sequence, 399 residues long: Probable aspartate/prephenate aminotransferase (399 aa).

L-aspartate-binding residues include glycine 39, tryptophan 125, and asparagine 175. The residue at position 239 (lysine 239) is an N6-(pyridoxal phosphate)lysine. Arginine 375 lines the L-aspartate pocket.

It belongs to the class-I pyridoxal-phosphate-dependent aminotransferase family. In terms of assembly, homodimer. It depends on pyridoxal 5'-phosphate as a cofactor.

Its subcellular location is the cytoplasm. The catalysed reaction is L-aspartate + 2-oxoglutarate = oxaloacetate + L-glutamate. The enzyme catalyses L-arogenate + 2-oxoglutarate = prephenate + L-glutamate. Catalyzes the reversible conversion of aspartate and 2-oxoglutarate to glutamate and oxaloacetate. Can also transaminate prephenate in the presence of glutamate. The protein is Probable aspartate/prephenate aminotransferase (aatA) of Rickettsia prowazekii (strain Madrid E).